A 517-amino-acid polypeptide reads, in one-letter code: Acyltransferase AFT15-1 (517 aa).

H180 functions as the Proton acceptor in the catalytic mechanism.

This sequence belongs to the plant acyltransferase family.

Its pathway is mycotoxin biosynthesis. In terms of biological role, acyltransferase; part of the gene clusters that mediate the biosynthesis of the host-selective toxins (HSTs) AF-toxins responsible for Alternaria black spot of strawberry disease by the strawberry pathotype. AF-toxin I and III are valine derivatives of 2,3-dyhydroxy-isovaleric acid and 2-hydroxy-isovaleric acid respectively, while AF II is an isoleucine derivative of 2-hydroxy-valeric acid. These derivatives are bound to a 9,10-epoxy-8-hydroxy-9-methyl-decatrienoic acid (EDA) moiety. On cellular level, AF-toxins affect plasma membrane of susceptible cells and cause a sudden increase in loss of K(+) after a few minutes of toxin treatment. The aldo-keto reductase AFTS1 catalyzes the conversion of 2-keto-isovaleric acid (2-KIV) to 2-hydroxy-isovaleric acid (2-HIV) by reduction of its ketone to an alcohol. The acyl-CoA ligase AFT1, the hydrolase AFT2 and the enoyl-CoA hydratases AFT3 and AFT6, but also the polyketide synthase AFT9, the acyl-CoA dehydrogenase AFT10, the cytochrome P450 monooxygenase AFT11 and the oxidoreductase AFT12 are all involved in the biosynthesis of the AK-, AF- and ACT-toxin common EDA structural moiety. The exact function of each enzyme, and of additional enzymes identified within the AF-toxin clusters have still to be determined. This Alternaria alternata (Alternaria rot fungus) protein is Acyltransferase AFT15-1 (AFT15-1).